The sequence spans 147 residues: MPLYEHVFLARQDASSQQVEELTNQITGVITGLGGKVTKTENWGVRSLTYRMKKNRKAHFVLLNIDGPAAVVSEIERQERIHEDVIRYLSIRVEEHEEGPSAMMRKADRDRERDDRGGGFRGDREGGFRGDRGPRRPREEAPAVVEE.

Residues 97 to 141 (EEGPSAMMRKADRDRERDDRGGGFRGDREGGFRGDRGPRRPREEA) are compositionally biased toward basic and acidic residues. A disordered region spans residues 97–147 (EEGPSAMMRKADRDRERDDRGGGFRGDREGGFRGDRGPRRPREEAPAVVEE).

This sequence belongs to the bacterial ribosomal protein bS6 family.

In terms of biological role, binds together with bS18 to 16S ribosomal RNA. In Nitrobacter hamburgensis (strain DSM 10229 / NCIMB 13809 / X14), this protein is Small ribosomal subunit protein bS6.